Here is a 456-residue protein sequence, read N- to C-terminus: Protein COBRA (456 aa).

The N-terminal stretch at 1-36 (MESFFSRSTSIVSKLSFLALWIVFLISSSSFTSTEA) is a signal peptide. N-linked (GlcNAc...) asparagine glycosylation is found at Asn-45, Asn-170, Asn-178, Asn-217, Asn-242, Asn-258, Asn-328, Asn-343, and Asn-362. A lipid anchor (GPI-anchor amidated asparagine) is attached at Asn-431. The propeptide at 432-456 (GGSRSQFSFVAAVLLPLLVFFFFSA) is removed in mature form.

Belongs to the COBRA family. In terms of tissue distribution, expressed in roots, stems, leaves, flowers and siliques. Up-regulated in the root zone of rapid longitudinal expansion.

It is found in the lateral cell membrane. Involved in determining the orientation of cell expansion, probably by playing an important role in cellulose deposition. May act by recruiting cellulose synthesizing complexes to discrete positions on the cell surface. In Arabidopsis thaliana (Mouse-ear cress), this protein is Protein COBRA (COB).